The primary structure comprises 357 residues: MGSLDVEKSAIGWAARDPSGLLSPYTYTLRNTGPEDVQVKVLYCGLCHSDLHQVKNDLGMSNYPLVPGHEVVGKVVEVGADVSKFKVGDTVGVGLLVGSCRNCGPCKREIEQYCNKKIWNCNDVYTDGKPTQGGFANSMVVDQNFVVKIPEGMAPEQAAPLLCAGITVYSPFNHFGFNQSGFRGGILGLGGVGHMGVKIAKAMGHHVTVISSSNKKRQEALEHLGADDYLVSSDTDKMQEAADSLDYIIDTVPVGHPLELYLSLLKIDGKLILIGVINTPLQFISPMVMLGRKSITGSFIGSMKETEEMLDFCKEKGVTSQIEIVKMDYINTAMERLEKNDVSYRFVVDVAGSKLDQ.

Residue Cys47 participates in Zn(2+) binding. Residue Ser49 participates in NADP(+) binding. Zn(2+)-binding residues include His69, Glu70, Cys100, Cys103, Cys106, Cys114, and Cys163. Residues Thr167, 188-193 (GLGGVG), 211-216 (SSSNKK), Thr251, Gly275, and 298-300 (SFI) each bind NADP(+).

It belongs to the zinc-containing alcohol dehydrogenase family. In terms of assembly, homodimer. Zn(2+) serves as cofactor. In terms of processing, the N-terminus is blocked.

It catalyses the reaction (E)-cinnamyl alcohol + NADP(+) = (E)-cinnamaldehyde + NADPH + H(+). The catalysed reaction is (E)-coniferol + NADP(+) = (E)-coniferaldehyde + NADPH + H(+). The enzyme catalyses (E)-sinapyl alcohol + NADP(+) = (E)-sinapaldehyde + NADPH + H(+). It carries out the reaction (E)-4-coumaroyl alcohol + NADP(+) = (E)-4-coumaraldehyde + NADPH + H(+). It catalyses the reaction (E)-caffeyl alcohol + NADP(+) = (E)-caffeyl aldehyde + NADPH + H(+). It functions in the pathway aromatic compound metabolism; phenylpropanoid biosynthesis. Its function is as follows. Involved in lignin biosynthesis. Catalyzes the final step specific for the production of lignin monomers. Catalyzes the NADPH-dependent reduction of coniferaldehyde, 5-hydroxyconiferaldehyde, sinapaldehyde, 4-coumaraldehyde and caffeyl aldehyde to their respective alcohols. The sequence is that of Probable cinnamyl alcohol dehydrogenase 2 (CAD19) from Nicotiana tabacum (Common tobacco).